Reading from the N-terminus, the 835-residue chain is MVDAITEFVVGKIGNYLIEEASMFMAVKEDLEELKTELTCIHGYLKDVEAREREDEVSKEWSKLVLDFAYDVEDVLDTYHLKLEERSQRRGLRRLTNKIGRKMDAYSIVDDIRILKRRILDITRKRETYGIGGLKEPQGGGNTSSLRVRQLRRARSVDQEEVVVGLEDDAKILLEKLLDYEEKNRFIISIFGMGGLGKTALARKLYNSRDVKERFEYRAWTYVSQEYKTGDILMRIIRSLGMTSGEELEKIRKFAEEELEVYLYGLLEGKKYLVVVDDIWEREAWDSLKRALPCNHEGSRVIITTRIKAVAEGVDGRFYAHKLRFLTFEESWELFEQRAFRNIQRKDEDLLKTGKEMVQKCRGLPLCIVVLAGLLSRKTPSEWNDVCNSLWRRLKDDSIHVAPIVFDLSFKELRHESKLCFLYLSIFPEDYEIDLEKLIHLLVAEGFIQGDEEMMMEDVARYYIEELIDRSLLEAVRRERGKVMSCRIHDLLRDVAIKKSKELNFVNVYNDHVAQHSSTTCRREVVHHQFKRYSSEKRKNKRMRSFLYFGEFDHLVGLDFETLKLLRVLDFGSLWLPFKINGDLIHLRYLGIDGNSINDFDIAAIISKLRFLQTLFVSDNYFIEETIDLRKLTSLRHVIGNFFGGLLIGDVANLQTLTSISFDSWNKLKPELLINLRDLGISEMSRSKERRVHVSWASLTKLESLRVLKLATPTEVHLSLESEEAVRSMDVISRSLESVTLVGITFEEDPMPFLQKMPRLEDLILLSCNYSGKMSVSEQGFGRLRKLDLLMRSLDELQIEEEAMPNLIELEISVSKRETKLIIPNRLRAFGQIYC.

Residues 25–41 (MAVKEDLEELKTELTCI) adopt a coiled-coil conformation. Residues 144 to 453 (SSLRVRQLRR…AEGFIQGDEE (310 aa)) enclose the NB-ARC domain. 192 to 199 (GMGGLGKT) is a binding site for ATP.

It belongs to the disease resistance NB-LRR family. RPP13 subfamily.

Functionally, disease resistance protein. Resistance proteins guard the plant against pathogens that contain an appropriate avirulence protein via an indirect interaction with this avirulence protein. That triggers a defense system including the hypersensitive response, which restricts the pathogen growth. In contrast to other resistance proteins, it works independently of ESD1 and NSD1 proteins and does not require the accumulation of salicylic acid, suggesting the existence of an independent signaling pathway. The specificity to avirulence proteins differs in the different cultivars. This chain is Disease resistance protein RPP13 (RPP13), found in Arabidopsis thaliana (Mouse-ear cress).